Here is an 879-residue protein sequence, read N- to C-terminus: Alanine--tRNA ligase 1 (879 aa).

H566, H570, C668, and H672 together coordinate Zn(2+).

It belongs to the class-II aminoacyl-tRNA synthetase family. Zn(2+) is required as a cofactor.

It is found in the cytoplasm. The catalysed reaction is tRNA(Ala) + L-alanine + ATP = L-alanyl-tRNA(Ala) + AMP + diphosphate. Its function is as follows. Catalyzes the attachment of alanine to tRNA(Ala) in a two-step reaction: alanine is first activated by ATP to form Ala-AMP and then transferred to the acceptor end of tRNA(Ala). Also edits incorrectly charged Ser-tRNA(Ala) and Gly-tRNA(Ala) via its editing domain. In Lachnoclostridium phytofermentans (strain ATCC 700394 / DSM 18823 / ISDg) (Clostridium phytofermentans), this protein is Alanine--tRNA ligase 1.